Here is a 421-residue protein sequence, read N- to C-terminus: 3-isopropylmalate dehydratase large subunit (421 aa).

The [4Fe-4S] cluster site is built by C292, C352, and C355.

The protein belongs to the aconitase/IPM isomerase family. LeuC type 2 subfamily. In terms of assembly, heterodimer of LeuC and LeuD. Requires [4Fe-4S] cluster as cofactor.

The enzyme catalyses (2R,3S)-3-isopropylmalate = (2S)-2-isopropylmalate. The protein operates within amino-acid biosynthesis; L-leucine biosynthesis; L-leucine from 3-methyl-2-oxobutanoate: step 2/4. In terms of biological role, catalyzes the isomerization between 2-isopropylmalate and 3-isopropylmalate, via the formation of 2-isopropylmaleate. This chain is 3-isopropylmalate dehydratase large subunit, found in Herpetosiphon aurantiacus (strain ATCC 23779 / DSM 785 / 114-95).